The sequence spans 289 residues: MASMQDLKRRMESITVTHKITKAMKMLSTVKLNRFKATLGKTKEFYQEFYEVIGAVITNYNKTKPRTTTPTNQSTKRLWIVINTQLGLCGSYNTNVGKLLVSELAKDDEIILVGTKLNSFLRTRNHEDQIIHTYSINDKNIDFESSYMIGKHVLELHEKNQYDSIDCVYTNYINSLNFEAKKIQLIPADPSIFQADTLDRINDKFPKNISFEPGVDVIIPALEKQLLQVILYGCLIESKVCEYASRRNAMDTAAKNADDLYNKYKLLYNQLRQAKITQEINEIVAGAAK.

Belongs to the ATPase gamma chain family. F-type ATPases have 2 components, CF(1) - the catalytic core - and CF(0) - the membrane proton channel. CF(1) has five subunits: alpha(3), beta(3), gamma(1), delta(1), epsilon(1). CF(0) has three main subunits: a, b and c.

It localises to the cell membrane. Produces ATP from ADP in the presence of a proton gradient across the membrane. The gamma chain is believed to be important in regulating ATPase activity and the flow of protons through the CF(0) complex. This chain is ATP synthase gamma chain, found in Mycoplasmoides gallisepticum (strain R(low / passage 15 / clone 2)) (Mycoplasma gallisepticum).